A 946-amino-acid chain; its full sequence is Rho GTPase-activating protein 4 (946 aa).

Residues 19-317 (TQVKEMRWQL…AVEALDPPGD (299 aa)) form the F-BAR domain. A coiled-coil region spans residues 128 to 195 (LAQRLSHIAE…REAERQEEKR (68 aa)). Positions 187–196 (EAERQEEKRA) are enriched in basic and acidic residues. Disordered stretches follow at residues 187 to 220 (EAER…SLKK) and 402 to 435 (LDSF…QQQE). 2 stretches are compositionally biased toward low complexity: residues 202–211 (TTTAGATEAG) and 407–419 (TSPS…STSS). The region spanning 507 to 695 (GDMEKFIQSS…TLIVQPDRVF (189 aa)) is the Rho-GAP domain. In terms of domain architecture, SH3 spans 746-805 (EGVVEAVACFAYTGRTAQELSFRRGDVLRLHERASSDWWRGEHNGMRGLIPHKYITLPAG). Residues Ser-860, Ser-901, and Ser-906 each carry the phosphoserine modification. The disordered stretch occupies residues 885–946 (KTSVRQGLGP…QGLDTTPKPH (62 aa)). The span at 901-910 (SPGPRSPKAP) shows a compositional bias: pro residues. The segment covering 924–934 (GPGAPASPSAS) has biased composition (low complexity).

Interacts with NCKAP1L. Predominantly in hematopoietic cells (spleen, thymus and leukocytes); low levels in placenta, lung and various fetal tissues.

The protein resides in the cytoplasm. Inhibitory effect on stress fiber organization. May down-regulate Rho-like GTPase in hematopoietic cells. In Homo sapiens (Human), this protein is Rho GTPase-activating protein 4.